The sequence spans 125 residues: MAITKEDVLEFISNLSVLELSELVKEFEEKFGVSAAPVMVAGGAVAAGGAAAAEEKTEFNIVLVDSGDKKINVIKVVRALTGLGLKEAKDAVEGTPSVLKEGVSKDEAEAAKKELEEAGAKVELK.

The protein belongs to the bacterial ribosomal protein bL12 family. Homodimer. Part of the ribosomal stalk of the 50S ribosomal subunit. Forms a multimeric L10(L12)X complex, where L10 forms an elongated spine to which 2 to 4 L12 dimers bind in a sequential fashion. Binds GTP-bound translation factors.

Forms part of the ribosomal stalk which helps the ribosome interact with GTP-bound translation factors. Is thus essential for accurate translation. The chain is Large ribosomal subunit protein bL12 from Campylobacter concisus (strain 13826).